The chain runs to 365 residues: UDP-N-acetylglucosamine--N-acetylmuramyl-(pentapeptide) pyrophosphoryl-undecaprenol N-acetylglucosamine transferase (365 aa).

UDP-N-acetyl-alpha-D-glucosamine is bound by residues 11–13 (TGG), asparagine 124, arginine 165, serine 192, isoleucine 246, and glutamine 291.

The protein belongs to the glycosyltransferase 28 family. MurG subfamily.

The protein localises to the cell inner membrane. It catalyses the reaction di-trans,octa-cis-undecaprenyl diphospho-N-acetyl-alpha-D-muramoyl-L-alanyl-D-glutamyl-meso-2,6-diaminopimeloyl-D-alanyl-D-alanine + UDP-N-acetyl-alpha-D-glucosamine = di-trans,octa-cis-undecaprenyl diphospho-[N-acetyl-alpha-D-glucosaminyl-(1-&gt;4)]-N-acetyl-alpha-D-muramoyl-L-alanyl-D-glutamyl-meso-2,6-diaminopimeloyl-D-alanyl-D-alanine + UDP + H(+). It functions in the pathway cell wall biogenesis; peptidoglycan biosynthesis. Cell wall formation. Catalyzes the transfer of a GlcNAc subunit on undecaprenyl-pyrophosphoryl-MurNAc-pentapeptide (lipid intermediate I) to form undecaprenyl-pyrophosphoryl-MurNAc-(pentapeptide)GlcNAc (lipid intermediate II). This is UDP-N-acetylglucosamine--N-acetylmuramyl-(pentapeptide) pyrophosphoryl-undecaprenol N-acetylglucosamine transferase from Nitratidesulfovibrio vulgaris (strain ATCC 29579 / DSM 644 / CCUG 34227 / NCIMB 8303 / VKM B-1760 / Hildenborough) (Desulfovibrio vulgaris).